The sequence spans 360 residues: MRILGIETSCDETAASVVLRDEEGRGRILGDVVLSQLEEHSAYGGVVPEIAARAHVEALDALIEEALLRAGVTLRDIDAVAATSGPGLIGGLIVGLMTGKAIARATGKPLYAVNHLEGHALTARLTDGLSFPYLMLLVSGGHTQLILVKGVGEYERWGTTIDDALGEAFDKTAKLLGLPYPGGPAVERAAQAGNAERFDFPRPLVGDARLDFSFSGLKTAVRQAAQSLGPVTDQDIADVCASFQRAISRTLRDRVGRGLKRFRADFASVDQPALVVAGGVAANQTLRRTLQSLCDEHGFRFIAPPLQLCTDNAAMIAWAGAERLAAGLPADGLDAAPRSRWPLDSEAKALIGSGRRGAKA.

Residues His-115 and His-119 each contribute to the Fe cation site. Substrate-binding positions include 137 to 141 (LVSGG), Asp-170, Gly-183, and Asn-283. Asp-311 lines the Fe cation pocket.

This sequence belongs to the KAE1 / TsaD family. It depends on Fe(2+) as a cofactor.

The protein resides in the cytoplasm. The enzyme catalyses L-threonylcarbamoyladenylate + adenosine(37) in tRNA = N(6)-L-threonylcarbamoyladenosine(37) in tRNA + AMP + H(+). In terms of biological role, required for the formation of a threonylcarbamoyl group on adenosine at position 37 (t(6)A37) in tRNAs that read codons beginning with adenine. Is involved in the transfer of the threonylcarbamoyl moiety of threonylcarbamoyl-AMP (TC-AMP) to the N6 group of A37, together with TsaE and TsaB. TsaD likely plays a direct catalytic role in this reaction. This Rhizobium meliloti (strain 1021) (Ensifer meliloti) protein is tRNA N6-adenosine threonylcarbamoyltransferase.